The primary structure comprises 185 residues: Threonylcarbamoyl-AMP synthase (185 aa).

The 179-residue stretch at 7 to 185 (AAQRRAARAH…IDFASGRVLR (179 aa)) folds into the YrdC-like domain.

This sequence belongs to the SUA5 family. TsaC subfamily.

The protein localises to the cytoplasm. The catalysed reaction is L-threonine + hydrogencarbonate + ATP = L-threonylcarbamoyladenylate + diphosphate + H2O. In terms of biological role, required for the formation of a threonylcarbamoyl group on adenosine at position 37 (t(6)A37) in tRNAs that read codons beginning with adenine. Catalyzes the conversion of L-threonine, HCO(3)(-)/CO(2) and ATP to give threonylcarbamoyl-AMP (TC-AMP) as the acyladenylate intermediate, with the release of diphosphate. The sequence is that of Threonylcarbamoyl-AMP synthase from Laribacter hongkongensis (strain HLHK9).